Here is a 312-residue protein sequence, read N- to C-terminus: Holliday junction branch migration complex subunit RuvB (312 aa).

Residues Met1–Tyr168 form a large ATPase domain (RuvB-L) region. Residues Arg8, Gly49, Lys52, Thr53, Thr54, Glu115–Phe117, Arg158, Tyr168, and Arg206 each bind ATP. Residue Thr53 participates in Mg(2+) binding. The interval Glu169–Gln234 is small ATPAse domain (RuvB-S). Residues Asp237 to Lys312 are head domain (RuvB-H). Residues Lys290 and Arg295 each coordinate DNA.

The protein belongs to the RuvB family. In terms of assembly, homohexamer. Forms an RuvA(8)-RuvB(12)-Holliday junction (HJ) complex. HJ DNA is sandwiched between 2 RuvA tetramers; dsDNA enters through RuvA and exits via RuvB. An RuvB hexamer assembles on each DNA strand where it exits the tetramer. Each RuvB hexamer is contacted by two RuvA subunits (via domain III) on 2 adjacent RuvB subunits; this complex drives branch migration. In the full resolvosome a probable DNA-RuvA(4)-RuvB(12)-RuvC(2) complex forms which resolves the HJ.

It localises to the cytoplasm. It carries out the reaction ATP + H2O = ADP + phosphate + H(+). In terms of biological role, the RuvA-RuvB-RuvC complex processes Holliday junction (HJ) DNA during genetic recombination and DNA repair, while the RuvA-RuvB complex plays an important role in the rescue of blocked DNA replication forks via replication fork reversal (RFR). RuvA specifically binds to HJ cruciform DNA, conferring on it an open structure. The RuvB hexamer acts as an ATP-dependent pump, pulling dsDNA into and through the RuvAB complex. RuvB forms 2 homohexamers on either side of HJ DNA bound by 1 or 2 RuvA tetramers; 4 subunits per hexamer contact DNA at a time. Coordinated motions by a converter formed by DNA-disengaged RuvB subunits stimulates ATP hydrolysis and nucleotide exchange. Immobilization of the converter enables RuvB to convert the ATP-contained energy into a lever motion, pulling 2 nucleotides of DNA out of the RuvA tetramer per ATP hydrolyzed, thus driving DNA branch migration. The RuvB motors rotate together with the DNA substrate, which together with the progressing nucleotide cycle form the mechanistic basis for DNA recombination by continuous HJ branch migration. Branch migration allows RuvC to scan DNA until it finds its consensus sequence, where it cleaves and resolves cruciform DNA. The polypeptide is Holliday junction branch migration complex subunit RuvB (Ureaplasma urealyticum serovar 10 (strain ATCC 33699 / Western)).